The primary structure comprises 378 residues: MTAQTSAVSVISAANRLVAKVGSSLVTNEGRGLDRAAVGHWAAQIAALHQQGKQVVLVSSGAIAEGMARLGWRKRPSAMHELQAAAAVGQMGLCQAYEAAFAEFGLRTAQILLTHEDLADRHRYLNARSTLFALLRLGVVPIVNENDTVVTDEIRFGDNDTLGALVTNLIEADALIILTDQRGLYEADPRRDPAARFVAHAQAGDAALEAMAGGAGSGVGTGGMLTKILAAKRAAHSGAHTVIASGRERNVLTRLAQGECIGTELRAVLPVWSARKQWLADHLRLRGRVVLDDGAVHALLHEGKSLLPIGVAEVQGEFERGDVVACVDMHGRECARGLINYSSADTRRILRQPSSQIARILGSMTDPELMHRDNLVVT.

An ATP-binding site is contributed by lysine 20. 3 residues coordinate substrate: serine 60, aspartate 147, and asparagine 159. Residues 179-180 (TD) and 221-227 (TGGMLTK) contribute to the ATP site. A PUA domain is found at 286–364 (RGRVVLDDGA…SQIARILGSM (79 aa)).

It belongs to the glutamate 5-kinase family.

The protein resides in the cytoplasm. The enzyme catalyses L-glutamate + ATP = L-glutamyl 5-phosphate + ADP. The protein operates within amino-acid biosynthesis; L-proline biosynthesis; L-glutamate 5-semialdehyde from L-glutamate: step 1/2. Its function is as follows. Catalyzes the transfer of a phosphate group to glutamate to form L-glutamate 5-phosphate. The chain is Glutamate 5-kinase from Bordetella pertussis (strain Tohama I / ATCC BAA-589 / NCTC 13251).